The sequence spans 75 residues: Small ribosomal subunit protein bS18 (75 aa).

It belongs to the bacterial ribosomal protein bS18 family. Part of the 30S ribosomal subunit. Forms a tight heterodimer with protein bS6.

Functionally, binds as a heterodimer with protein bS6 to the central domain of the 16S rRNA, where it helps stabilize the platform of the 30S subunit. The sequence is that of Small ribosomal subunit protein bS18 from Thermosipho melanesiensis (strain DSM 12029 / CIP 104789 / BI429).